Consider the following 424-residue polypeptide: Nicotinate phosphoribosyltransferase (424 aa).

A Phosphohistidine; by autocatalysis modification is found at His-242.

Belongs to the NAPRTase family. In terms of processing, transiently phosphorylated on a His residue during the reaction cycle. Phosphorylation strongly increases the affinity for substrates and increases the rate of nicotinate D-ribonucleotide production. Dephosphorylation regenerates the low-affinity form of the enzyme, leading to product release.

It carries out the reaction nicotinate + 5-phospho-alpha-D-ribose 1-diphosphate + ATP + H2O = nicotinate beta-D-ribonucleotide + ADP + phosphate + diphosphate. The protein operates within cofactor biosynthesis; NAD(+) biosynthesis; nicotinate D-ribonucleotide from nicotinate: step 1/1. In terms of biological role, catalyzes the synthesis of beta-nicotinate D-ribonucleotide from nicotinate and 5-phospho-D-ribose 1-phosphate at the expense of ATP. The chain is Nicotinate phosphoribosyltransferase from Bartonella bacilliformis (strain ATCC 35685 / KC583 / Herrer 020/F12,63).